Reading from the N-terminus, the 396-residue chain is MIKKVTIEKIKSPERFLEVPLLTKEEVGQAIDKVIRQLELNLDYFKEDFPTPATFDNVYPIMDNTEWTNGFWTGELWLAYEYSQQDAFKNIAHKNVLSFLDRVNKRVELDHHDLGFLYTPSCMAEYKINGDGEAREATLKAADKLIERYQEKGGFIQAWGDLGKKEHYRLIIDCLLNIQLLFFAYQETGDQKYYDIAESHFYASANNVIRDDASSFHTFYFDPETGQPFKGVTRQGYSDDSCWARGQSWGVYGIPLTYRHLKDESCFDLFKGVTNYFLNRLPKDHVSYWDLIFNDGSDQSRDSSATAIAVCGIHEMLKHLPEVDADKDIYKHAMHAMLRSLIEHYANDQFTPGGTSLLHGVYSWHSGKGVDEGNIWGDYYYLEALIRFYKDWNLYW.

Aspartate 113 serves as the catalytic Nucleophile. The substrate site is built by aspartate 113, aspartate 173, glycine 231, threonine 233, arginine 245, tryptophan 249, serine 363, and serine 366. The active-site Proton donor is aspartate 173.

This sequence belongs to the glycosyl hydrolase 88 family. As to quaternary structure, monomer.

It catalyses the reaction beta-D-4-deoxy-Delta(4)-GlcpA-(1-&gt;3)-beta-D-GalpNAc6S + H2O = N-acetyl-beta-D-galactosamine 6-sulfate + 5-dehydro-4-deoxy-D-glucuronate. Functionally, catalyzes the hydrolysis of unsaturated hyaluronate and chondroitin disaccharides. Also degrades unsaturated heparin disaccharides. Releases 4-deoxy-4,5-didehydro D-glucuronic acid or 4-deoxy-4,5-didehydro L-iduronic acid from chondroitin disaccharides, hyaluronan disaccharides and heparin disaccharides and cleaves both glycosidic (1-&gt;3) and (1-&gt;4) bonds. Prefers sulfated glycosaminoglycans compared to unsulfated glycosaminoglycans. Probably required for mammalian cells invasion through the degradation of extracellular sulfated glycosaminoglycans such as chondroitin and hyaluronan. This Streptococcus pneumoniae (strain ATCC BAA-255 / R6) protein is Unsaturated chondroitin disaccharide hydrolase (ugl).